A 188-amino-acid polypeptide reads, in one-letter code: MDSSKKIIIVMFLVTFYMFSCVSSTEFEVGGENGWIVPKSKTLGDAFNQWASDNRFKVGDTLRFKYTKDSVLVVSEEEYKKCKATKPQLYSNNEDTVFKLDRPGLFYFISGVSGHCEKGQKMIVKVMETESSTESPPPSSSSSSSSSSSLPASTPKAKKSNAFKTAVQFSSSGFVVSAVLIVSVFGLV.

The N-terminal stretch at 1–24 (MDSSKKIIIVMFLVTFYMFSCVSS) is a signal peptide. Residues 25 to 128 (TEFEVGGENG…GQKMIVKVME (104 aa)) enclose the Phytocyanin domain. Cys82 and Cys116 are disulfide-bonded. Positions 127–157 (METESSTESPPPSSSSSSSSSSSLPASTPKA) are disordered. The span at 129–155 (TESSTESPPPSSSSSSSSSSSLPASTP) shows a compositional bias: low complexity. Ser170 carries the GPI-anchor amidated serine lipid modification. Residues 171-188 (SSGFVVSAVLIVSVFGLV) constitute a propeptide, removed in mature form.

It belongs to the early nodulin-like (ENODL) family. In terms of tissue distribution, mostly expressed in leaves and flowers, and, to a lower extent, in stems.

The protein resides in the cell membrane. May act as a carbohydrate transporter. Mainly required for reproductive functions. The chain is Early nodulin-like protein 5 from Arabidopsis thaliana (Mouse-ear cress).